We begin with the raw amino-acid sequence, 2163 residues long: Myosin-VIIa (2163 aa).

Residues 58–728 form the Myosin motor domain; the sequence is QGVEDMISLG…HDLFLEQERD (671 aa). 151 to 158 contacts ATP; that stretch reads GESGAGKT. Actin-binding stretches follow at residues 607–629 and 707–721; these read LDSL…KPNE and QLGH…AHDL. 4 consecutive IQ domains span residues 731–753, 754–783, 800–822, and 823–852; these read LTRK…RFLR, MRQA…GYMR, LRGH…EYGL, and KMWA…EYRR. A coiled-coil region spans residues 886–914; sequence RLNEIERKEIEQELEERRRVEVKKNIIND. The tract at residues 937 to 958 is disordered; sequence PDSSSEAPTPHGGRETSVFNDL. The 237-residue stretch at 1003–1239 folds into the MyTH4 1 domain; the sequence is YSRKPLKHPL…PSWLELQATK (237 aa). The FERM 1 domain occupies 1244–1554; it reads IMLPITFMDG…YFLEGLKKRS (311 aa). The SH3 domain occupies 1552–1621; the sequence is KRSKFVIALQ…PAEIVYVLPS (70 aa). A MyTH4 2 domain is found at 1697–1845; that stretch reads YSREPLKQPL…PHQVEVEAIQ (149 aa). Residues 1851–2154 form the FERM 2 domain; it reads IFHKVYFPDD…SYISLMLTNM (304 aa).

The protein belongs to the TRAFAC class myosin-kinesin ATPase superfamily. Myosin family. In terms of assembly, homodimerizes in a two headed molecule through the formation of a coiled-coil rod.

It is found in the cytoplasm. Functionally, myosins are actin-based motor molecules with ATPase activity. Unconventional myosins serve in intracellular movements: can function in cells as a single-molecule cargo transporter. A very slow and high-duty-ratio motor, may be suitable for tension maintenance of actin filaments. Their highly divergent tails are presumed to bind to membranous compartments, which would be moved relative to actin filaments. Plays a key role in the formation of cellular projections and other actin-based functions required for embryonic and larval viability. Necessary for auditory transduction: plays a role in Johnston organ (JO) organization by functioning in scolopidial apical attachment and therefore to acoustic stimulus propagation from the antenna a2/a3 joint to transducing elements. The protein is Myosin-VIIa of Aedes aegypti (Yellowfever mosquito).